A 166-amino-acid polypeptide reads, in one-letter code: Putative universal stress protein SE_1385 (166 aa).

The protein belongs to the universal stress protein A family.

It is found in the cytoplasm. This chain is Putative universal stress protein SE_1385, found in Staphylococcus epidermidis (strain ATCC 12228 / FDA PCI 1200).